Reading from the N-terminus, the 221-residue chain is Ribonuclease HII (221 aa).

One can recognise an RNase H type-2 domain in the interval 29–220 (RRVAGVDEVG…LRDLQAGEIG (192 aa)). The a divalent metal cation site is built by Asp35, Glu36, and Asp129. Residues 198-221 (LGPSPQHRRSFAPLRDLQAGEIGG) are disordered.

The protein belongs to the RNase HII family. Mn(2+) is required as a cofactor. It depends on Mg(2+) as a cofactor.

The protein resides in the cytoplasm. The catalysed reaction is Endonucleolytic cleavage to 5'-phosphomonoester.. Its function is as follows. Endonuclease that specifically degrades the RNA of RNA-DNA hybrids. The protein is Ribonuclease HII of Synechococcus sp. (strain JA-3-3Ab) (Cyanobacteria bacterium Yellowstone A-Prime).